The following is a 685-amino-acid chain: UvrABC system protein C (685 aa).

Residues 15–93 enclose the GIY-YIG domain; that stretch reads ALPGVYRYFD…IKTQNPRFNI (79 aa). The region spanning 214–249 is the UVR domain; the sequence is QELLQAMEARMMAYSGQLAFEQAAEVRNQMQALSRV. Over residues 365-388 the composition is skewed to low complexity; that stretch reads AQGGDHAPAAQGGDPPPAASSGGH. The disordered stretch occupies residues 365–391; sequence AQGGDHAPAAQGGDPPPAASSGGHPLR.

Belongs to the UvrC family. As to quaternary structure, interacts with UvrB in an incision complex.

The protein localises to the cytoplasm. The UvrABC repair system catalyzes the recognition and processing of DNA lesions. UvrC both incises the 5' and 3' sides of the lesion. The N-terminal half is responsible for the 3' incision and the C-terminal half is responsible for the 5' incision. The sequence is that of UvrABC system protein C from Verminephrobacter eiseniae (strain EF01-2).